Here is a 218-residue protein sequence, read N- to C-terminus: Probable transaldolase (218 aa).

The active-site Schiff-base intermediate with substrate is Lys83.

This sequence belongs to the transaldolase family. Type 3B subfamily.

Its subcellular location is the cytoplasm. It carries out the reaction D-sedoheptulose 7-phosphate + D-glyceraldehyde 3-phosphate = D-erythrose 4-phosphate + beta-D-fructose 6-phosphate. It functions in the pathway carbohydrate degradation; pentose phosphate pathway; D-glyceraldehyde 3-phosphate and beta-D-fructose 6-phosphate from D-ribose 5-phosphate and D-xylulose 5-phosphate (non-oxidative stage): step 2/3. In terms of biological role, transaldolase is important for the balance of metabolites in the pentose-phosphate pathway. This Mesorhizobium japonicum (strain LMG 29417 / CECT 9101 / MAFF 303099) (Mesorhizobium loti (strain MAFF 303099)) protein is Probable transaldolase (tal).